We begin with the raw amino-acid sequence, 69 residues long: Cytochrome b-c1 complex subunit 6-1, mitochondrial (69 aa).

2 disulfides stabilise this stretch: Cys17–Cys59 and Cys31–Cys45.

It belongs to the UQCRH/QCR6 family. As to quaternary structure, component of the ubiquinol-cytochrome c oxidoreductase (cytochrome b-c1 complex, complex III, CIII), a multisubunit enzyme composed of 10 subunits. The complex is composed of 3 respiratory subunits cytochrome b (MT-CYB), cytochrome c1 (CYC1-1 or CYC1-2) and Rieske protein (UCR1-1 or UCR1-2), 2 core protein subunits MPPalpha1 (or MPPalpha2) and MPPB, and 5 low-molecular weight protein subunits QCR7-1 (or QCR7-2), UCRQ-1 (or UCRQ-2), QCR9, UCRY and probably QCR6-1 (or QCR6-2). The complex exists as an obligatory dimer and forms supercomplexes (SCs) in the inner mitochondrial membrane with NADH-ubiquinone oxidoreductase (complex I, CI), resulting in different assemblies (supercomplexes SCI(1)III(2) and SCI(2)III(4)).

It localises to the mitochondrion inner membrane. In terms of biological role, component of the ubiquinol-cytochrome c oxidoreductase, a multisubunit transmembrane complex that is part of the mitochondrial electron transport chain which drives oxidative phosphorylation. The respiratory chain contains 3 multisubunit complexes succinate dehydrogenase (complex II, CII), ubiquinol-cytochrome c oxidoreductase (cytochrome b-c1 complex, complex III, CIII) and cytochrome c oxidase (complex IV, CIV), that cooperate to transfer electrons derived from NADH and succinate to molecular oxygen, creating an electrochemical gradient over the inner membrane that drives transmembrane transport and the ATP synthase. The cytochrome b-c1 complex catalyzes electron transfer from ubiquinol to cytochrome c, linking this redox reaction to translocation of protons across the mitochondrial inner membrane, with protons being carried across the membrane as hydrogens on the quinol. In the process called Q cycle, 2 protons are consumed from the matrix, 4 protons are released into the intermembrane space and 2 electrons are passed to cytochrome c. This Arabidopsis thaliana (Mouse-ear cress) protein is Cytochrome b-c1 complex subunit 6-1, mitochondrial (QCR6-1).